Reading from the N-terminus, the 727-residue chain is Polyphosphate kinase (727 aa).

Residue Asn82 participates in ATP binding. Mg(2+) contacts are provided by Arg412 and Arg442. His472 functions as the Phosphohistidine intermediate in the catalytic mechanism. Positions 505, 601, and 629 each coordinate ATP.

It belongs to the polyphosphate kinase 1 (PPK1) family. Mg(2+) is required as a cofactor. An intermediate of this reaction is the autophosphorylated ppk in which a phosphate is covalently linked to a histidine residue through a N-P bond.

It carries out the reaction [phosphate](n) + ATP = [phosphate](n+1) + ADP. Functionally, catalyzes the reversible transfer of the terminal phosphate of ATP to form a long-chain polyphosphate (polyP). The chain is Polyphosphate kinase from Pseudomonas putida (strain ATCC 47054 / DSM 6125 / CFBP 8728 / NCIMB 11950 / KT2440).